A 633-amino-acid chain; its full sequence is NBPF family member NBPF3 (633 aa).

The disordered stretch occupies residues 15–52 (RGPDVETSPFGAPRAASHGVGRHQELRDPTVPGPTSSA). Residues 127-186 (LRDERLLTEEKLAEELGQAEELRQYKVLVHSQERELTQLREKLQEGRDASRSLNQHLQAL) adopt a coiled-coil conformation. Olduvai domains are found at residues 221-313 (ENDD…CIIP), 314-402 (ENES…ATSP), 405-460 (SREL…LDLD), 461-552 (RMKK…PPCP), and 555-633 (NEVL…IFPH). Positions 316-326 (ESDHEQEEEKG) are enriched in basic and acidic residues. The tract at residues 316–370 (ESDHEQEEEKGPVSPRNLQESEEEEAPQESWDEGDWTLSIPPDMSASYQSDRSTF) is disordered. Residues 335–350 (ESEEEEAPQESWDEGD) are compositionally biased toward acidic residues. Residues 463–484 (KKDQEEEEDQGPPCPRLSRELP) form a disordered region.

The protein belongs to the NBPF family. Expressed in testis and fetal heart, as well as in non small cell lung carcinoma and neuroblastoma cell line.

It localises to the cytoplasm. The chain is NBPF family member NBPF3 from Homo sapiens (Human).